We begin with the raw amino-acid sequence, 343 residues long: Holliday junction branch migration complex subunit RuvB (343 aa).

Residues 4 to 193 (TDNLTAAQPQ…FGIVSRLEFY (190 aa)) are large ATPase domain (RuvB-L). ATP-binding positions include Leu-32, Arg-33, Gly-74, Lys-77, Thr-78, Thr-79, 140–142 (EDY), Arg-183, Tyr-193, and Arg-230. Thr-78 contributes to the Mg(2+) binding site. The segment at 194–264 (ENRDLATIVS…IADAALSMLD (71 aa)) is small ATPAse domain (RuvB-S). The segment at 267 to 343 (VQGLDVMDRK…YLHFGLPVEK (77 aa)) is head domain (RuvB-H). The DNA site is built by Arg-322 and Arg-327.

It belongs to the RuvB family. Homohexamer. Forms an RuvA(8)-RuvB(12)-Holliday junction (HJ) complex. HJ DNA is sandwiched between 2 RuvA tetramers; dsDNA enters through RuvA and exits via RuvB. An RuvB hexamer assembles on each DNA strand where it exits the tetramer. Each RuvB hexamer is contacted by two RuvA subunits (via domain III) on 2 adjacent RuvB subunits; this complex drives branch migration. In the full resolvosome a probable DNA-RuvA(4)-RuvB(12)-RuvC(2) complex forms which resolves the HJ.

It is found in the cytoplasm. It catalyses the reaction ATP + H2O = ADP + phosphate + H(+). Its function is as follows. The RuvA-RuvB-RuvC complex processes Holliday junction (HJ) DNA during genetic recombination and DNA repair, while the RuvA-RuvB complex plays an important role in the rescue of blocked DNA replication forks via replication fork reversal (RFR). RuvA specifically binds to HJ cruciform DNA, conferring on it an open structure. The RuvB hexamer acts as an ATP-dependent pump, pulling dsDNA into and through the RuvAB complex. RuvB forms 2 homohexamers on either side of HJ DNA bound by 1 or 2 RuvA tetramers; 4 subunits per hexamer contact DNA at a time. Coordinated motions by a converter formed by DNA-disengaged RuvB subunits stimulates ATP hydrolysis and nucleotide exchange. Immobilization of the converter enables RuvB to convert the ATP-contained energy into a lever motion, pulling 2 nucleotides of DNA out of the RuvA tetramer per ATP hydrolyzed, thus driving DNA branch migration. The RuvB motors rotate together with the DNA substrate, which together with the progressing nucleotide cycle form the mechanistic basis for DNA recombination by continuous HJ branch migration. Branch migration allows RuvC to scan DNA until it finds its consensus sequence, where it cleaves and resolves cruciform DNA. The sequence is that of Holliday junction branch migration complex subunit RuvB from Neisseria meningitidis serogroup A / serotype 4A (strain DSM 15465 / Z2491).